A 36-amino-acid chain; its full sequence is Photosystem II reaction center protein M (36 aa).

The chain crosses the membrane as a helical span at residues 5–25; the sequence is ILAFIATALFILVPTAFLLII.

The protein belongs to the PsbM family. In terms of assembly, PSII is composed of 1 copy each of membrane proteins PsbA, PsbB, PsbC, PsbD, PsbE, PsbF, PsbH, PsbI, PsbJ, PsbK, PsbL, PsbM, PsbT, PsbX, PsbY, PsbZ, Psb30/Ycf12, at least 3 peripheral proteins of the oxygen-evolving complex and a large number of cofactors. It forms dimeric complexes.

The protein localises to the plastid. The protein resides in the chloroplast thylakoid membrane. Its function is as follows. One of the components of the core complex of photosystem II (PSII). PSII is a light-driven water:plastoquinone oxidoreductase that uses light energy to abstract electrons from H(2)O, generating O(2) and a proton gradient subsequently used for ATP formation. It consists of a core antenna complex that captures photons, and an electron transfer chain that converts photonic excitation into a charge separation. This subunit is found at the monomer-monomer interface. The protein is Photosystem II reaction center protein M of Panax ginseng (Korean ginseng).